Consider the following 283-residue polypeptide: NAD kinase (283 aa).

The Proton acceptor role is filled by Asp-69. NAD(+) contacts are provided by residues 69-70 (DG), 138-139 (NE), Lys-166, Asp-168, Leu-176, 179-184 (TAYNLS), and Gln-235.

This sequence belongs to the NAD kinase family. A divalent metal cation is required as a cofactor.

The protein resides in the cytoplasm. It catalyses the reaction NAD(+) + ATP = ADP + NADP(+) + H(+). In terms of biological role, involved in the regulation of the intracellular balance of NAD and NADP, and is a key enzyme in the biosynthesis of NADP. Catalyzes specifically the phosphorylation on 2'-hydroxyl of the adenosine moiety of NAD to yield NADP. This is NAD kinase from Helicobacter acinonychis (strain Sheeba).